Here is a 303-residue protein sequence, read N- to C-terminus: GTPase Era (303 aa).

The 169-residue stretch at 8-176 (YCGFIAIVGR…ASIVRKHMPE (169 aa)) folds into the Era-type G domain. The tract at residues 16-23 (GRPNVGKS) is G1. 16–23 (GRPNVGKS) contacts GTP. The segment at 42 to 46 (QTTRH) is G2. Positions 63–66 (DTPG) are G3. GTP is bound by residues 63 to 67 (DTPGL) and 125 to 128 (NKVD). A G4 region spans residues 125-128 (NKVD). The interval 155-157 (ISA) is G5. The region spanning 207–284 (LGEELPYSVT…HLELWVKVKS (78 aa)) is the KH type-2 domain.

Belongs to the TRAFAC class TrmE-Era-EngA-EngB-Septin-like GTPase superfamily. Era GTPase family. As to quaternary structure, monomer.

It is found in the cytoplasm. The protein resides in the cell inner membrane. An essential GTPase that binds both GDP and GTP, with rapid nucleotide exchange. Plays a role in 16S rRNA processing and 30S ribosomal subunit biogenesis and possibly also in cell cycle regulation and energy metabolism. In Yersinia pseudotuberculosis serotype O:1b (strain IP 31758), this protein is GTPase Era.